Reading from the N-terminus, the 201-residue chain is 5'(3')-deoxyribonucleotidase, cytosolic type (201 aa).

Residue D10 is the Nucleophile of the active site. Residues D10 and D12 each contribute to the Mg(2+) site. D12 (proton donor) is an active-site residue. Substrate is bound by residues F18, F44, Y65, T99, and K134. D145 is a binding site for Mg(2+). Phosphoserine is present on S182.

Belongs to the 5'(3')-deoxyribonucleotidase family. As to quaternary structure, homodimer. Requires Mg(2+) as cofactor. As to expression, detected in skeletal muscle, heart and pancreas.

The protein resides in the cytoplasm. Its function is as follows. Dephosphorylates the 5' and 2'(3')-phosphates of deoxyribonucleotides, with a preference for dUMP and dTMP, intermediate activity towards dGMP, and low activity towards dCMP and dAMP. The polypeptide is 5'(3')-deoxyribonucleotidase, cytosolic type (NT5C) (Homo sapiens (Human)).